The following is a 183-amino-acid chain: Ribosome-recycling factor (183 aa).

It belongs to the RRF family.

It is found in the cytoplasm. In terms of biological role, responsible for the release of ribosomes from messenger RNA at the termination of protein biosynthesis. May increase the efficiency of translation by recycling ribosomes from one round of translation to another. In Bifidobacterium longum (strain DJO10A), this protein is Ribosome-recycling factor.